Here is a 258-residue protein sequence, read N- to C-terminus: 14-3-3-like protein 16R (258 aa).

The segment at 238–258 (DMQDDGTDEIKEAAPKPDNNE) is disordered. Basic and acidic residues predominate over residues 245–258 (DEIKEAAPKPDNNE).

It belongs to the 14-3-3 family.

The sequence is that of 14-3-3-like protein 16R from Solanum tuberosum (Potato).